A 218-amino-acid chain; its full sequence is Hypoxanthine-guanine phosphoribosyltransferase (218 aa).

Residues Lys-69, 134–142, Lys-166, 186–188, and Asp-194 each bind GMP; these read EDIIDTGKT and KFV. Residue Asp-138 is the Proton acceptor of the active site. A Mg(2+)-binding site is contributed by Asp-194.

The protein belongs to the purine/pyrimidine phosphoribosyltransferase family. As to quaternary structure, homotetramer. Mg(2+) is required as a cofactor.

The protein resides in the cytoplasm. It carries out the reaction IMP + diphosphate = hypoxanthine + 5-phospho-alpha-D-ribose 1-diphosphate. It catalyses the reaction GMP + diphosphate = guanine + 5-phospho-alpha-D-ribose 1-diphosphate. The protein operates within purine metabolism; IMP biosynthesis via salvage pathway; IMP from hypoxanthine: step 1/1. In terms of biological role, converts guanine to guanosine monophosphate, and hypoxanthine to inosine monophosphate. Transfers the 5-phosphoribosyl group from 5-phosphoribosylpyrophosphate onto the purine. Plays a central role in the generation of purine nucleotides through the purine salvage pathway. This Gallus gallus (Chicken) protein is Hypoxanthine-guanine phosphoribosyltransferase (HPRT1).